Consider the following 204-residue polypeptide: Protein-L-isoaspartate O-methyltransferase (204 aa).

It belongs to the methyltransferase superfamily. L-isoaspartyl/D-aspartyl protein methyltransferase family. As to quaternary structure, monomer.

The protein localises to the cytoplasm. It catalyses the reaction [protein]-L-isoaspartate + S-adenosyl-L-methionine = [protein]-L-isoaspartate alpha-methyl ester + S-adenosyl-L-homocysteine. In terms of biological role, catalyzes the methyl esterification of L-isoaspartyl residues in peptides and proteins that result from spontaneous decomposition of normal L-aspartyl and L-asparaginyl residues. It plays a role in the repair and/or degradation of damaged proteins. This chain is Protein-L-isoaspartate O-methyltransferase (pcm), found in Rhizobium meliloti (strain 1021) (Ensifer meliloti).